The primary structure comprises 675 residues: UvrABC system protein B (675 aa).

One can recognise a Helicase ATP-binding domain in the interval E32 to V417. ATP is bound at residue G45–T52. Residues Y98–I121 carry the Beta-hairpin motif. The 167-residue stretch at Q436–I602 folds into the Helicase C-terminal domain. The region spanning I634–N669 is the UVR domain.

It belongs to the UvrB family. Forms a heterotetramer with UvrA during the search for lesions. Interacts with UvrC in an incision complex.

It localises to the cytoplasm. Its function is as follows. The UvrABC repair system catalyzes the recognition and processing of DNA lesions. A damage recognition complex composed of 2 UvrA and 2 UvrB subunits scans DNA for abnormalities. Upon binding of the UvrA(2)B(2) complex to a putative damaged site, the DNA wraps around one UvrB monomer. DNA wrap is dependent on ATP binding by UvrB and probably causes local melting of the DNA helix, facilitating insertion of UvrB beta-hairpin between the DNA strands. Then UvrB probes one DNA strand for the presence of a lesion. If a lesion is found the UvrA subunits dissociate and the UvrB-DNA preincision complex is formed. This complex is subsequently bound by UvrC and the second UvrB is released. If no lesion is found, the DNA wraps around the other UvrB subunit that will check the other stand for damage. This Neisseria gonorrhoeae (strain ATCC 700825 / FA 1090) protein is UvrABC system protein B.